Reading from the N-terminus, the 547-residue chain is CTP synthase (547 aa).

The amidoligase domain stretch occupies residues 1-265; it reads MTKFVFVTGG…DRIVCEKLAL (265 aa). S13 provides a ligand contact to CTP. Residue S13 participates in UTP binding. ATP-binding positions include 14 to 19 and D71; that span reads SLGKGI. Residues D71 and E139 each contribute to the Mg(2+) site. Residues 146 to 148, 186 to 191, and K222 each bind CTP; these read DIE and KTKPTQ. UTP is bound by residues 186-191 and K222; that span reads KTKPTQ. A Glutamine amidotransferase type-1 domain is found at 290 to 542; that stretch reads TIGMVGKYVD…IKAALAHKHA (253 aa). L-glutamine is bound at residue G351. The Nucleophile; for glutamine hydrolysis role is filled by C378. L-glutamine contacts are provided by residues 379–382, E402, and R468; that span reads LGMQ. Active-site residues include H515 and E517.

The protein belongs to the CTP synthase family. In terms of assembly, homotetramer.

It catalyses the reaction UTP + L-glutamine + ATP + H2O = CTP + L-glutamate + ADP + phosphate + 2 H(+). The catalysed reaction is L-glutamine + H2O = L-glutamate + NH4(+). The enzyme catalyses UTP + NH4(+) + ATP = CTP + ADP + phosphate + 2 H(+). Its pathway is pyrimidine metabolism; CTP biosynthesis via de novo pathway; CTP from UDP: step 2/2. Allosterically activated by GTP, when glutamine is the substrate; GTP has no effect on the reaction when ammonia is the substrate. The allosteric effector GTP functions by stabilizing the protein conformation that binds the tetrahedral intermediate(s) formed during glutamine hydrolysis. Inhibited by the product CTP, via allosteric rather than competitive inhibition. In terms of biological role, catalyzes the ATP-dependent amination of UTP to CTP with either L-glutamine or ammonia as the source of nitrogen. Regulates intracellular CTP levels through interactions with the four ribonucleotide triphosphates. This Janthinobacterium sp. (strain Marseille) (Minibacterium massiliensis) protein is CTP synthase.